We begin with the raw amino-acid sequence, 122 residues long: Small ribosomal subunit protein uS13 (122 aa).

Residues 99–122 (RGQRTHTNARTRKGPAKAIAGKKK) form a disordered region.

The protein belongs to the universal ribosomal protein uS13 family. As to quaternary structure, part of the 30S ribosomal subunit. Forms a loose heterodimer with protein S19. Forms two bridges to the 50S subunit in the 70S ribosome.

Functionally, located at the top of the head of the 30S subunit, it contacts several helices of the 16S rRNA. In the 70S ribosome it contacts the 23S rRNA (bridge B1a) and protein L5 of the 50S subunit (bridge B1b), connecting the 2 subunits; these bridges are implicated in subunit movement. Contacts the tRNAs in the A and P-sites. The protein is Small ribosomal subunit protein uS13 of Rhizobium meliloti (strain 1021) (Ensifer meliloti).